The sequence spans 645 residues: Ethylene response sensor 2 (645 aa).

4 consecutive transmembrane segments (helical) span residues 5 to 25 (LLVQ…VTAA), 54 to 74 (VGDF…VYFV), 86 to 106 (VVCE…LAGF), and 125 to 145 (LTGI…PLLL). Cys97 and His101 together coordinate Cu cation. One can recognise a GAF domain in the interval 190–346 (DRHTILYTTL…VVADQVAVAI (157 aa)). The region spanning 389–623 (MMSDAMRCPV…VFRFQLRRSM (235 aa)) is the Histidine kinase domain.

This sequence belongs to the ethylene receptor family. In terms of assembly, heteromer with ETR1. It depends on Cu cation as a cofactor. Post-translationally, autophosphorylated predominantly on Ser residues. In terms of tissue distribution, expressed in etiolated seedlings, leaves, roots and stems. Highly expressed in flowers, stamens, pollen cells, tapetum cells, carpels and ovules.

Its subcellular location is the endoplasmic reticulum membrane. Its function is as follows. Ethylene receptor related to bacterial two-component regulators. Acts as a redundant negative regulator of ethylene signaling. In Arabidopsis thaliana (Mouse-ear cress), this protein is Ethylene response sensor 2 (ERS2).